Consider the following 108-residue polypeptide: Protein ORFa in retron Ec67 (108 aa).

The chain is Protein ORFa in retron Ec67 from Escherichia coli.